The sequence spans 199 residues: Thymidylate kinase (199 aa).

7 to 14 (GIDGSGKS) provides a ligand contact to ATP.

The protein belongs to the thymidylate kinase family.

It carries out the reaction dTMP + ATP = dTDP + ADP. Phosphorylation of dTMP to form dTDP in both de novo and salvage pathways of dTTP synthesis. The chain is Thymidylate kinase from Thermosipho melanesiensis (strain DSM 12029 / CIP 104789 / BI429).